Here is a 315-residue protein sequence, read N- to C-terminus: Putative olfactory receptor 2I1 (315 aa).

The Extracellular segment spans residues 1–24 (MKANYSAEERFLLLGFSDWPSLQP). A helical membrane pass occupies residues 25-48 (VLFALVLLCYLLTLTGNSALVLLA). Residues 49–56 (VRDPRLHT) are Cytoplasmic-facing. A helical membrane pass occupies residues 57-78 (PMYYFLCHLALVDAGFTTSVVP). The Extracellular portion of the chain corresponds to 79 to 99 (PLLANLRGPALWLPRSHCTAQ). Cysteine 96 and cysteine 188 are disulfide-bonded. The chain crosses the membrane as a helical span at residues 100–119 (LCASLALGSAECVLLAVMAL). The Cytoplasmic segment spans residues 120 to 138 (DRAAAVCRPLRYAGLVSPR). A helical membrane pass occupies residues 139–157 (LCRTLASASWLSGLTNSVA). Topologically, residues 158–195 (QTALLAERPLCAPRLLDHFICELPALLKLACGGDGDTT) are extracellular. The helical transmembrane segment at 196 to 219 (ENQMFAARVVILLLPFAVILASYG) threads the bilayer. The Cytoplasmic portion of the chain corresponds to 220-236 (AVARAVCCMRFSGGRRR). The chain crosses the membrane as a helical span at residues 237 to 259 (AVGTCGSHLTAVCLFYGSAIYTY). The Extracellular portion of the chain corresponds to 260–272 (LQPAQRYNQARGK). A helical membrane pass occupies residues 273-292 (FVSLFYTVVTPALNPLIYTL). Residues 293 to 315 (RNKKVKGAARRLLRSLGRGQAGQ) are Cytoplasmic-facing.

It belongs to the G-protein coupled receptor 1 family.

Its subcellular location is the cell membrane. Its function is as follows. Odorant receptor. The sequence is that of Putative olfactory receptor 2I1 from Homo sapiens (Human).